We begin with the raw amino-acid sequence, 138 residues long: Large ribosomal subunit protein uL14 (138 aa).

The protein belongs to the universal ribosomal protein uL14 family. In terms of assembly, part of the 50S ribosomal subunit. Forms a cluster with proteins L3 and L24e, part of which may contact the 16S rRNA in 2 intersubunit bridges.

Its function is as follows. Binds to 23S rRNA. Forms part of two intersubunit bridges in the 70S ribosome. The chain is Large ribosomal subunit protein uL14 from Metallosphaera sedula (strain ATCC 51363 / DSM 5348 / JCM 9185 / NBRC 15509 / TH2).